The chain runs to 981 residues: Translation initiation factor IF-2 (981 aa).

Positions Phe31 to Glu370 are disordered. A compositionally biased stretch (low complexity) spans Gly64–Gly87. Residues Gly88–Pro111 are compositionally biased toward pro residues. Residues Ala112 to Ala121 are compositionally biased toward low complexity. The span at Pro136–Ala145 shows a compositional bias: pro residues. Low complexity predominate over residues Ala146–Ala165. A compositionally biased stretch (pro residues) spans Arg256 to Gly269. The span at Ala270–Ala279 shows a compositional bias: low complexity. Residues Pro280–Gly339 are compositionally biased toward gly residues. Positions Arg356–Lys365 are enriched in basic residues. Residues Ser477–Asp649 form the tr-type G domain. The interval Gly486–Thr493 is G1. Gly486–Thr493 provides a ligand contact to GTP. The interval Gly511–His515 is G2. Residues Asp536 to Gly539 form a G3 region. GTP contacts are provided by residues Asp536 to His540 and Asn590 to Asp593. A G4 region spans residues Asn590–Asp593. The interval Ser626 to Lys628 is G5.

It belongs to the TRAFAC class translation factor GTPase superfamily. Classic translation factor GTPase family. IF-2 subfamily.

It is found in the cytoplasm. Its function is as follows. One of the essential components for the initiation of protein synthesis. Protects formylmethionyl-tRNA from spontaneous hydrolysis and promotes its binding to the 30S ribosomal subunits. Also involved in the hydrolysis of GTP during the formation of the 70S ribosomal complex. The polypeptide is Translation initiation factor IF-2 (Rhodococcus erythropolis (strain PR4 / NBRC 100887)).